The primary structure comprises 182 residues: Large ribosomal subunit protein uL5c (182 aa).

The protein belongs to the universal ribosomal protein uL5 family. As to quaternary structure, part of the 50S ribosomal subunit; contacts the 5S rRNA.

The protein resides in the plastid. The protein localises to the chloroplast. Binds 5S rRNA, forms part of the central protuberance of the 50S subunit. In Emiliania huxleyi (Coccolithophore), this protein is Large ribosomal subunit protein uL5c (rpl5).